We begin with the raw amino-acid sequence, 233 residues long: Nuclear speckle RNA-binding protein A (233 aa).

3 disordered regions span residues 1–54, 68–92, and 214–233; these read MADG…VPDT, VQSG…GGNV, and FLRL…RGRR. The span at 71 to 91 shows a compositional bias: gly residues; sequence GEGGSVSMGRSGGGGGGGGGN. The RRM domain maps to 136–222; it reads NTLYVEGLPS…KFLRLQFSRK (87 aa).

In terms of tissue distribution, expressed in root meristems, lateral root primordia and root vascular tissues.

It localises to the nucleus speckle. Its function is as follows. Alternative splicing (AS) regulator that binds to specific mRNAs and modulates auxin effects on the transcriptome. Displaced from its targets upon binding to AS competitor long non-coding RNA (ASCO-RNA). This chain is Nuclear speckle RNA-binding protein A, found in Arabidopsis thaliana (Mouse-ear cress).